A 247-amino-acid chain; its full sequence is Neurotrophic factor BDNF precursor form (247 aa).

Positions 1 to 18 (MTILFLTMVISYFGCMKA) are cleaved as a signal peptide. Residues 19–128 (APMKEANVRG…AANMSMRVRR (110 aa)) constitute a propeptide that is removed on maturation. Residue Asn121 is glycosylated (N-linked (GlcNAc...) asparagine). Disulfide bonds link Cys141/Cys208, Cys186/Cys237, and Cys196/Cys239.

It belongs to the NGF-beta family. Monomers and homodimers. Binds to NTRK2/TRKB. Can form heterodimers with other neurotrophin family members, such as NTF3 and NTF4 (in vitro), but the physiological relevance of this is not clear. BDNF precursor form: interacts with the heterodimer formed by NGFR and SORCS2. Mature BDNF has much lower affinity for the heterodimer formed by NGFR and SORCS2. In terms of processing, N-glycosylated and glycosulfated, contrary to mature BDNF. Post-translationally, mature BDNF is produced by proteolytic removal of the propeptide, catalyzed by a FURIN family member. In addition, the precursor form is proteolytically cleaved within the propeptide, but this is not an obligatory intermediate for the production of mature BDNF. Can be converted into mature BDNF by plasmin (PLG).

It localises to the secreted. Important signaling molecule that activates signaling cascades downstream of NTRK2. During development, promotes the survival and differentiation of selected neuronal populations of the peripheral and central nervous systems. Participates in axonal growth, pathfinding and in the modulation of dendritic growth and morphology. Major regulator of synaptic transmission and plasticity at adult synapses in many regions of the CNS. The versatility of BDNF is emphasized by its contribution to a range of adaptive neuronal responses including long-term potentiation (LTP), long-term depression (LTD), certain forms of short-term synaptic plasticity, as well as homeostatic regulation of intrinsic neuronal excitability. Its function is as follows. Important signaling molecule that activates signaling cascades downstream of NTRK2. Activates signaling cascades via the heterodimeric receptor formed by NGFR and SORCS2. Signaling via NGFR and SORCS2 plays a role in synaptic plasticity and long-term depression (LTD). Binding to NGFR and SORCS2 promotes neuronal apoptosis. Promotes neuronal growth cone collapse. The chain is Neurotrophic factor BDNF precursor form (BDNF) from Ailurus fulgens (Himalayan red panda).